The primary structure comprises 521 residues: Lysine--tRNA ligase (521 aa).

The 'HIGH' region motif lies at 32-40 (PSGTVHIGN). The 'KMSKS' region motif lies at 280–284 (KISSS).

The protein belongs to the class-I aminoacyl-tRNA synthetase family.

Its subcellular location is the cytoplasm. The enzyme catalyses tRNA(Lys) + L-lysine + ATP = L-lysyl-tRNA(Lys) + AMP + diphosphate. The chain is Lysine--tRNA ligase from Borrelia garinii subsp. bavariensis (strain ATCC BAA-2496 / DSM 23469 / PBi) (Borreliella bavariensis).